Here is a 456-residue protein sequence, read N- to C-terminus: MLNDPFQRLGLDREILTVSQLNGRARALLEDVFAQVWVEGEISNLARPASGHLYFTLKDRQAQVRCALFRQNALRVREILRDGLAVRVRGRVSLYEGRGDFQLILDLLEPAGDGALRLAFEALKEKLAAEGLFAAERKRPLPAHPRSIGIVSSPTGAVIRDIVSVFRRRAPQVELTLVPTAVQGREAVAQIVHALELADRQGFDALILARGGGSLEDLWCFNEEVVARAVAACATPVVSAVGHETDVTIADFVADLRAPTPSAAAELLAPDSSDLQRRLDGLQRRLQLRMRHLLAARRLQLDGLSRRLRHPGERLQQQAQRLDDLELRLRRAMQRRLQGDAERLARLDTRLAAQHPERLLGLLRQRLEHLAERLPRAMRSTLRERRQRLEATAQTLQAVSPLATLGRGYAILLDERGRAIRAAVQAHPGQRLHARLAEGALELRVEAAFPSPPQPD.

Belongs to the XseA family. As to quaternary structure, heterooligomer composed of large and small subunits.

It localises to the cytoplasm. The enzyme catalyses Exonucleolytic cleavage in either 5'- to 3'- or 3'- to 5'-direction to yield nucleoside 5'-phosphates.. Bidirectionally degrades single-stranded DNA into large acid-insoluble oligonucleotides, which are then degraded further into small acid-soluble oligonucleotides. The sequence is that of Exodeoxyribonuclease 7 large subunit from Azotobacter vinelandii (strain DJ / ATCC BAA-1303).